Consider the following 475-residue polypeptide: Ankyrin repeat, SAM and basic leucine zipper domain-containing protein 1 (475 aa).

Residues Ser17, Ser18, and Ser20 each carry the phosphoserine modification. ANK repeat units follow at residues Glu45–Thr74, Tyr78–Phe107, Asp110–Met144, Arg148–Ala177, Asn181–Ile210, and Asp214–Gly243. The region spanning Ser272–Glu334 is the SAM domain.

In terms of assembly, interacts with DDX4, PIWIL1, RANBP9 and TDRD1.

The protein localises to the cytoplasm. Its function is as follows. Plays a central role during spermatogenesis by repressing transposable elements and preventing their mobilization, which is essential for the germline integrity. Acts via the piRNA metabolic process, which mediates the repression of transposable elements during meiosis by forming complexes composed of piRNAs and Piwi proteins and governs the methylation and subsequent repression of transposons. Its association with pi-bodies suggests a participation in the primary piRNAs metabolic process. Required prior to the pachytene stage to facilitate the production of multiple types of piRNAs, including those associated with repeats involved in the regulation of retrotransposons. May act by mediating protein-protein interactions during germ cell maturation. In Atelerix albiventris (Middle-African hedgehog), this protein is Ankyrin repeat, SAM and basic leucine zipper domain-containing protein 1 (ASZ1).